The sequence spans 409 residues: Tyrosine--tRNA ligase (409 aa).

Residue Tyr-39 participates in L-tyrosine binding. A 'HIGH' region motif is present at residues 44–53 (PTAASLHVGS). 2 residues coordinate L-tyrosine: Tyr-176 and Gln-180. Residues 236–240 (KMGKT) carry the 'KMSKS' region motif. ATP is bound at residue Lys-239. Residues 346–408 (ISLVDALVGL…GKKAHGVIQA (63 aa)) form the S4 RNA-binding domain.

This sequence belongs to the class-I aminoacyl-tRNA synthetase family. TyrS type 1 subfamily. Homodimer.

It localises to the cytoplasm. The enzyme catalyses tRNA(Tyr) + L-tyrosine + ATP = L-tyrosyl-tRNA(Tyr) + AMP + diphosphate + H(+). In terms of biological role, catalyzes the attachment of tyrosine to tRNA(Tyr) in a two-step reaction: tyrosine is first activated by ATP to form Tyr-AMP and then transferred to the acceptor end of tRNA(Tyr). The chain is Tyrosine--tRNA ligase from Zymomonas mobilis subsp. mobilis (strain ATCC 31821 / ZM4 / CP4).